The primary structure comprises 248 residues: tRNA pseudouridine synthase A (248 aa).

Aspartate 52 functions as the Nucleophile in the catalytic mechanism. Residue tyrosine 113 coordinates substrate.

The protein belongs to the tRNA pseudouridine synthase TruA family. In terms of assembly, homodimer.

The catalysed reaction is uridine(38/39/40) in tRNA = pseudouridine(38/39/40) in tRNA. Its function is as follows. Formation of pseudouridine at positions 38, 39 and 40 in the anticodon stem and loop of transfer RNAs. This Mesorhizobium japonicum (strain LMG 29417 / CECT 9101 / MAFF 303099) (Mesorhizobium loti (strain MAFF 303099)) protein is tRNA pseudouridine synthase A.